A 427-amino-acid chain; its full sequence is 3-phosphoshikimate 1-carboxyvinyltransferase (427 aa).

3-phosphoshikimate-binding residues include Lys22, Ser23, and Arg27. Lys22 lines the phosphoenolpyruvate pocket. Phosphoenolpyruvate is bound by residues Gly96 and Arg124. The 3-phosphoshikimate site is built by Ser169, Ser170, Gln171, Ser197, Asp313, Asn336, and Lys340. Position 171 (Gln171) interacts with phosphoenolpyruvate. The active-site Proton acceptor is Asp313. Phosphoenolpyruvate-binding residues include Arg344, Arg386, and Lys411.

This sequence belongs to the EPSP synthase family. As to quaternary structure, monomer.

It localises to the cytoplasm. The enzyme catalyses 3-phosphoshikimate + phosphoenolpyruvate = 5-O-(1-carboxyvinyl)-3-phosphoshikimate + phosphate. It functions in the pathway metabolic intermediate biosynthesis; chorismate biosynthesis; chorismate from D-erythrose 4-phosphate and phosphoenolpyruvate: step 6/7. Its function is as follows. Catalyzes the transfer of the enolpyruvyl moiety of phosphoenolpyruvate (PEP) to the 5-hydroxyl of shikimate-3-phosphate (S3P) to produce enolpyruvyl shikimate-3-phosphate and inorganic phosphate. The sequence is that of 3-phosphoshikimate 1-carboxyvinyltransferase from Shigella dysenteriae.